A 288-amino-acid chain; its full sequence is Oxaloacetate decarboxylase (288 aa).

Position 47 (Ser47) interacts with substrate. Asp85 provides a ligand contact to Mg(2+). Substrate contacts are provided by Arg156 and His232.

The protein belongs to the isocitrate lyase/PEP mutase superfamily. Oxaloacetate decarboxylase family. In terms of assembly, homotetramer; dimer of dimers. Mg(2+) serves as cofactor.

The catalysed reaction is oxaloacetate + H(+) = pyruvate + CO2. Catalyzes the decarboxylation of oxaloacetate into pyruvate. Seems to play a role in maintaining cellular concentrations of bicarbonate and pyruvate. This is Oxaloacetate decarboxylase from Rhodopseudomonas palustris (strain ATCC BAA-98 / CGA009).